Here is a 137-residue protein sequence, read N- to C-terminus: Nucleoside diphosphate kinase (137 aa).

Residues K9, F57, R85, T91, R102, and N112 each contribute to the ATP site. Residue H115 is the Pros-phosphohistidine intermediate of the active site.

The protein belongs to the NDK family. In terms of assembly, homotetramer. Mg(2+) serves as cofactor.

It is found in the cytoplasm. The catalysed reaction is a 2'-deoxyribonucleoside 5'-diphosphate + ATP = a 2'-deoxyribonucleoside 5'-triphosphate + ADP. It carries out the reaction a ribonucleoside 5'-diphosphate + ATP = a ribonucleoside 5'-triphosphate + ADP. In terms of biological role, major role in the synthesis of nucleoside triphosphates other than ATP. The ATP gamma phosphate is transferred to the NDP beta phosphate via a ping-pong mechanism, using a phosphorylated active-site intermediate. This chain is Nucleoside diphosphate kinase, found in Sulfurovum sp. (strain NBC37-1).